Here is a 209-residue protein sequence, read N- to C-terminus: Redox-sensing transcriptional repressor Rex (209 aa).

Positions 16–55 (LYYRFIQNLSLSGKQRVSSAELSEAVKVDSATIRRDFSYF) form a DNA-binding region, H-T-H motif. Residue 90–95 (GVGNLG) participates in NAD(+) binding.

It belongs to the transcriptional regulatory Rex family. As to quaternary structure, homodimer.

Its subcellular location is the cytoplasm. Its function is as follows. Modulates transcription in response to changes in cellular NADH/NAD(+) redox state. The protein is Redox-sensing transcriptional repressor Rex of Bacillus thuringiensis (strain Al Hakam).